The following is a 456-amino-acid chain: Ammonium transporter Amt2 (456 aa).

The next 11 helical transmembrane spans lie at 18-38 (LVWV…FAML), 61-81 (IGVI…AGLT), 109-129 (WLFG…AVAG), 141-161 (ILIA…GGFL), 170-190 (AGGM…AWII), 211-231 (ITFA…FNVG), 255-275 (VALV…GVAF), 281-301 (VDTL…TAIA), 304-324 (IVWP…PIVF), 339-359 (VFPV…VFAV), and 377-397 (VGVG…FGGF).

Belongs to the ammonia transporter channel (TC 1.A.11.2) family. As to quaternary structure, homotrimer. Interacts with both GlnK1 and GlnK2 after ammonium shock.

Its subcellular location is the cell membrane. In terms of biological role, involved in the uptake of ammonium/ammonia (NH(4)(+)/NH(3)). Transport is electrogenic. This chain is Ammonium transporter Amt2, found in Haloferax mediterranei (strain ATCC 33500 / DSM 1411 / JCM 8866 / NBRC 14739 / NCIMB 2177 / R-4) (Halobacterium mediterranei).